Here is a 162-residue protein sequence, read N- to C-terminus: Large ribosomal subunit protein uL10 (162 aa).

It belongs to the universal ribosomal protein uL10 family. In terms of assembly, part of the ribosomal stalk of the 50S ribosomal subunit. The N-terminus interacts with L11 and the large rRNA to form the base of the stalk. The C-terminus forms an elongated spine to which L12 dimers bind in a sequential fashion forming a multimeric L10(L12)X complex.

In terms of biological role, forms part of the ribosomal stalk, playing a central role in the interaction of the ribosome with GTP-bound translation factors. The sequence is that of Large ribosomal subunit protein uL10 from Borreliella afzelii (strain PKo) (Borrelia afzelii).